Consider the following 213-residue polypeptide: Urease accessory protein UreG (213 aa).

Residue Gly10–Thr17 participates in GTP binding.

The protein belongs to the SIMIBI class G3E GTPase family. UreG subfamily. Homodimer. UreD, UreF and UreG form a complex that acts as a GTP-hydrolysis-dependent molecular chaperone, activating the urease apoprotein by helping to assemble the nickel containing metallocenter of UreC. The UreE protein probably delivers the nickel.

It is found in the cytoplasm. Its function is as follows. Facilitates the functional incorporation of the urease nickel metallocenter. This process requires GTP hydrolysis, probably effectuated by UreG. In Deinococcus radiodurans (strain ATCC 13939 / DSM 20539 / JCM 16871 / CCUG 27074 / LMG 4051 / NBRC 15346 / NCIMB 9279 / VKM B-1422 / R1), this protein is Urease accessory protein UreG.